The sequence spans 212 residues: uncharacterized protein (212 aa).

Residues Gly-53, Glu-74, and Asp-97 each contribute to the S-adenosyl-L-methionine site.

This sequence belongs to the methyltransferase superfamily. YrrT family.

Functionally, could be a S-adenosyl-L-methionine-dependent methyltransferase. This is an uncharacterized protein from Bacillus cereus (strain ZK / E33L).